Consider the following 258-residue polypeptide: Phosphate import ATP-binding protein PstB (258 aa).

The 243-residue stretch at 5–247 (IDISGLSAFY…ERIFSNPSVQ (243 aa)) folds into the ABC transporter domain. Residue 37–44 (GPSGCGKS) coordinates ATP.

It belongs to the ABC transporter superfamily. Phosphate importer (TC 3.A.1.7) family. The complex is composed of two ATP-binding proteins (PstB), two transmembrane proteins (PstC and PstA) and a solute-binding protein (PstS).

The protein resides in the cell membrane. It carries out the reaction phosphate(out) + ATP + H2O = ADP + 2 phosphate(in) + H(+). Its function is as follows. Part of the ABC transporter complex PstSACB involved in phosphate import. Responsible for energy coupling to the transport system. The chain is Phosphate import ATP-binding protein PstB from Streptomyces griseus.